A 738-amino-acid polypeptide reads, in one-letter code: Prolyl oligopeptidase A (738 aa).

Residues Ser-581, Asp-665, and His-701 each act as charge relay system in the active site.

It belongs to the peptidase S9A family. Monomer.

The catalysed reaction is Hydrolysis of Pro-|-Xaa &gt;&gt; Ala-|-Xaa in oligopeptides.. Its function is as follows. Housekeeping prolyl oligopeptidase (POP) that behaves like a conventional POP by cleaving peptide bonds on the C-terminal side of prolyl residues within peptides that are up to approximately 30 amino acids long. The protein is Prolyl oligopeptidase A of Galerina marginata (strain CBS 339.88).